The following is a 343-amino-acid chain: Nuclease EXOG, mitochondrial (343 aa).

Residue His121 is the Proton acceptor of the active site. Asn152 provides a ligand contact to a divalent metal cation.

This sequence belongs to the DNA/RNA non-specific endonuclease family. Homodimer. It depends on a divalent metal cation as a cofactor.

It localises to the mitochondrion inner membrane. Functionally, endo/exonuclease with nicking activity towards supercoiled DNA, a preference for single-stranded DNA and 5'-3' exonuclease activity. This Danio rerio (Zebrafish) protein is Nuclease EXOG, mitochondrial (exog).